Reading from the N-terminus, the 257-residue chain is Zinc transporter ZupT (257 aa).

8 consecutive transmembrane segments (helical) span residues 5–25 (LILTLLAGAATFIGAFLGVLG), 33–53 (LAFSLGFAAGIMLLISLMEML), 61–81 (GMSPVLGYGMFIIGLLGYFGL), 109–129 (AILLTLGISLHNFPEGIATFV), 137–157 (LGFGIALAVALHNIPEGLAVA), 171–191 (IFWAGISGMAEILGGVLAWLI), 195–215 (LVSPIVMAAIMAAVAGIMVAL), and 236–256 (GVLCGMSIMGLSLVILQTIGI). Fe(2+) contacts are provided by N120 and E123. Zn(2+) contacts are provided by E123 and H148. Fe(2+) contacts are provided by N149, E152, and E181. Position 152 (E152) interacts with Zn(2+).

The protein belongs to the ZIP transporter (TC 2.A.5) family. ZupT subfamily.

The protein localises to the cell inner membrane. It catalyses the reaction Zn(2+)(in) = Zn(2+)(out). In terms of biological role, mediates zinc uptake. May also transport other divalent cations. The sequence is that of Zinc transporter ZupT from Salmonella paratyphi A (strain ATCC 9150 / SARB42).